A 1161-amino-acid polypeptide reads, in one-letter code: Lateral signaling target protein 2 homolog (1161 aa).

Disordered stretches follow at residues Ala-417–Asp-510, Ala-583–Ser-831, Met-890–Pro-918, Asp-935–Ser-978, Ser-992–Glu-1014, and Gly-1029–Arg-1095. Gly residues predominate over residues Gly-419–Gly-429. Over residues Pro-438–Pro-453 the composition is skewed to basic residues. Basic and acidic residues predominate over residues Gly-468–Ile-487. Acidic residues predominate over residues Glu-488 to Asp-510. The segment covering Ala-583–Ser-601 has biased composition (low complexity). The segment covering Ser-669–Asp-704 has biased composition (acidic residues). Residues Lys-728–Arg-742 show a composition bias toward basic residues. Positions Pro-743–Lys-757 are enriched in low complexity. A compositionally biased stretch (basic residues) spans Ser-758 to His-773. 2 stretches are compositionally biased toward low complexity: residues Gly-781 to Ser-800 and Met-807 to Ser-831. Acidic residues predominate over residues Glu-896 to Ser-910. Polar residues-rich tracts occupy residues Asp-935 to Tyr-948 and Glu-956 to Ser-967. Residues Gly-996–Arg-1010 are compositionally biased toward gly residues. Residues Ser-1054–Asn-1065 are compositionally biased toward low complexity. The span at Thr-1081 to Pro-1094 shows a compositional bias: basic and acidic residues. The segment at Asp-1099–Val-1159 adopts an FYVE-type zinc-finger fold. Zn(2+)-binding residues include Cys-1105, Cys-1108, Cys-1121, Cys-1124, Cys-1129, Cys-1132, Cys-1151, and Cys-1154.

The protein belongs to the lst-2 family.

In terms of biological role, negative regulator of epidermal growth factor receptor (EGFR) signaling. This chain is Lateral signaling target protein 2 homolog, found in Anopheles gambiae (African malaria mosquito).